Reading from the N-terminus, the 257-residue chain is Dihydroorotate dehydrogenase B (NAD(+)), electron transfer subunit (257 aa).

Positions isoleucine 2–valine 101 constitute an FAD-binding FR-type domain. Residues arginine 52–serine 55, isoleucine 69–arginine 71, and glycine 76–threonine 77 each bind FAD. [2Fe-2S] cluster-binding residues include cysteine 220, cysteine 225, cysteine 228, and cysteine 244.

This sequence belongs to the PyrK family. As to quaternary structure, heterotetramer of 2 PyrK and 2 PyrD type B subunits. The cofactor is [2Fe-2S] cluster. Requires FAD as cofactor.

Its pathway is pyrimidine metabolism; UMP biosynthesis via de novo pathway; orotate from (S)-dihydroorotate (NAD(+) route): step 1/1. Functionally, responsible for channeling the electrons from the oxidation of dihydroorotate from the FMN redox center in the PyrD type B subunit to the ultimate electron acceptor NAD(+). The chain is Dihydroorotate dehydrogenase B (NAD(+)), electron transfer subunit from Lysinibacillus sphaericus (strain C3-41).